Consider the following 254-residue polypeptide: 5'-nucleotidase SurE (254 aa).

The a divalent metal cation site is built by aspartate 8, aspartate 9, serine 40, and asparagine 93.

It belongs to the SurE nucleotidase family. Requires a divalent metal cation as cofactor.

It localises to the cytoplasm. It catalyses the reaction a ribonucleoside 5'-phosphate + H2O = a ribonucleoside + phosphate. In terms of biological role, nucleotidase that shows phosphatase activity on nucleoside 5'-monophosphates. The protein is 5'-nucleotidase SurE of Actinobacillus pleuropneumoniae serotype 5b (strain L20).